The sequence spans 437 residues: Phosphoethanolamine N-methyltransferase 2 (437 aa).

N-methylethanolamine phosphate-binding positions include 186-187 (QY) and tyrosine 195. S-adenosyl-L-homocysteine is bound by residues 204 to 205 (IS), glycine 232, aspartate 254, 281 to 282 (DA), and arginine 298. N-methylethanolamine phosphate is bound by residues tyrosine 329, tyrosine 343, 347-349 (RAY), and lysine 415.

This sequence belongs to the class I-like SAM-binding methyltransferase superfamily.

It carries out the reaction N-methylethanolamine phosphate + S-adenosyl-L-methionine = N,N-dimethylethanolamine phosphate + S-adenosyl-L-homocysteine + H(+). It catalyses the reaction N,N-dimethylethanolamine phosphate + S-adenosyl-L-methionine = phosphocholine + S-adenosyl-L-homocysteine + H(+). It participates in phospholipid metabolism; phosphatidylcholine biosynthesis; phosphocholine from phosphoethanolamine. With respect to regulation, feedback inhibition by phosphatidylcholine and also by S-adenosylhomocysteine. Its function is as follows. Catalyzes the last two methylation reactions in the synthesis of phosphocholine, by converting phospho-monomethylethanolamine (N-methylethanolamine phosphate) into phospho-dimethylethanolamine (N,N-dimethylethanolamine phosphate) and the latter into phosphocholine. Phosphocholine is a precursor for phosphatidylcholine, a major component in membranes and a precursor itself in the production of glycoconjugates secreted by parasitic nematodes to avoid host immune responses. The protein is Phosphoethanolamine N-methyltransferase 2 of Caenorhabditis elegans.